The primary structure comprises 214 residues: MIPKCRCSAGGLADRTPYEEVVLDTMLYSARLKENVARQNSAVIVAMARLIASTFEDGGKLLLCGNGGSAADAQHLATELTIRYRSSVERPALPAIALNADTTALTAGANDLGYDVVFRRLAEAYGREGDVVLGLSTSGNSRSVFNVLQYARGHGMKTIALTGGDGGIIKDLADLSIVVPHSGSADRVQECHITIGHVIIDLVERLLGYSPSRK.

Residues 51-209 (IASTFEDGGK…IDLVERLLGY (159 aa)) form the SIS domain. Substrate is bound at residue 66 to 68 (NGG). Histidine 75 and glutamate 79 together coordinate Zn(2+). Residues glutamate 79, 110–111 (ND), 136–138 (STS), serine 141, and glutamine 189 each bind substrate. Glutamine 189 and histidine 197 together coordinate Zn(2+).

Belongs to the SIS family. GmhA subfamily. Zn(2+) serves as cofactor.

It is found in the cytoplasm. It catalyses the reaction 2 D-sedoheptulose 7-phosphate = D-glycero-alpha-D-manno-heptose 7-phosphate + D-glycero-beta-D-manno-heptose 7-phosphate. Its pathway is carbohydrate biosynthesis; D-glycero-D-manno-heptose 7-phosphate biosynthesis; D-glycero-alpha-D-manno-heptose 7-phosphate and D-glycero-beta-D-manno-heptose 7-phosphate from sedoheptulose 7-phosphate: step 1/1. Catalyzes the isomerization of sedoheptulose 7-phosphate in D-glycero-D-manno-heptose 7-phosphate. This Chlorobium limicola (strain DSM 245 / NBRC 103803 / 6330) protein is Phosphoheptose isomerase.